A 243-amino-acid chain; its full sequence is Phosphoribosylaminoimidazole-succinocarboxamide synthase (243 aa).

Belongs to the SAICAR synthetase family.

It catalyses the reaction 5-amino-1-(5-phospho-D-ribosyl)imidazole-4-carboxylate + L-aspartate + ATP = (2S)-2-[5-amino-1-(5-phospho-beta-D-ribosyl)imidazole-4-carboxamido]succinate + ADP + phosphate + 2 H(+). It participates in purine metabolism; IMP biosynthesis via de novo pathway; 5-amino-1-(5-phospho-D-ribosyl)imidazole-4-carboxamide from 5-amino-1-(5-phospho-D-ribosyl)imidazole-4-carboxylate: step 1/2. In Thermosynechococcus vestitus (strain NIES-2133 / IAM M-273 / BP-1), this protein is Phosphoribosylaminoimidazole-succinocarboxamide synthase.